The following is a 393-amino-acid chain: Upstream-binding factor 1-like protein 1 (393 aa).

DNA-binding regions (HMG box) lie at residues 100 to 168 (PKRP…ARFR) and 222 to 288 (QKPP…DLWL). The segment at 308 to 393 (KNMAMTGGPD…SSGEEIEVDV (86 aa)) is disordered. Residues 365–377 (EENRKKDREKEES) show a composition bias toward basic and acidic residues.

The protein resides in the cytoplasm. It localises to the nucleus. Its function is as follows. Essential for proliferation of the inner cell mass and trophectodermal cells in peri-implantation development. The sequence is that of Upstream-binding factor 1-like protein 1 from Homo sapiens (Human).